We begin with the raw amino-acid sequence, 460 residues long: V-type ATP synthase beta chain (460 aa).

The protein belongs to the ATPase alpha/beta chains family.

Functionally, produces ATP from ADP in the presence of a proton gradient across the membrane. The V-type beta chain is a regulatory subunit. In Dictyoglomus turgidum (strain DSM 6724 / Z-1310), this protein is V-type ATP synthase beta chain.